We begin with the raw amino-acid sequence, 387 residues long: Ubiquitin-conjugating enzyme E2 25 (387 aa).

Residues A117–D164 are disordered. Residues V120–D131 show a composition bias toward basic and acidic residues. Residues P139–D164 show a composition bias toward acidic residues. The 167-residue stretch at T214–Y380 folds into the UBC core domain. C315 functions as the Glycyl thioester intermediate in the catalytic mechanism.

Belongs to the ubiquitin-conjugating enzyme family. As to expression, in the embryo, expressed in precursor neuron and muscle cells and in other cells such as hypodermal cells. After hatching of L1 larvae and in all subsequent stages, strongest expression in pharyngeal muscle and anal muscle cells. In L4 larvae and adolescent hermaphrodites, also expressed in the vulval muscles. Expression also detected in all four nerve cords and in neurons with weaker levels in all body wall muscles.

It localises to the cytoplasm. The protein localises to the nucleus. It carries out the reaction S-ubiquitinyl-[E1 ubiquitin-activating enzyme]-L-cysteine + [E2 ubiquitin-conjugating enzyme]-L-cysteine = [E1 ubiquitin-activating enzyme]-L-cysteine + S-ubiquitinyl-[E2 ubiquitin-conjugating enzyme]-L-cysteine.. It participates in protein modification; protein ubiquitination. Functionally, catalyzes the covalent attachment of ubiquitin to other proteins (Potential). Required for the maintenance of neuromuscular function. The protein is Ubiquitin-conjugating enzyme E2 25 of Caenorhabditis elegans.